Reading from the N-terminus, the 284-residue chain is Bifunctional protein FolD (284 aa).

NADP(+) is bound at residue 166 to 168 (GAS).

It belongs to the tetrahydrofolate dehydrogenase/cyclohydrolase family. In terms of assembly, homodimer.

It catalyses the reaction (6R)-5,10-methylene-5,6,7,8-tetrahydrofolate + NADP(+) = (6R)-5,10-methenyltetrahydrofolate + NADPH. The enzyme catalyses (6R)-5,10-methenyltetrahydrofolate + H2O = (6R)-10-formyltetrahydrofolate + H(+). It participates in one-carbon metabolism; tetrahydrofolate interconversion. Catalyzes the oxidation of 5,10-methylenetetrahydrofolate to 5,10-methenyltetrahydrofolate and then the hydrolysis of 5,10-methenyltetrahydrofolate to 10-formyltetrahydrofolate. The protein is Bifunctional protein FolD of Legionella pneumophila subsp. pneumophila (strain Philadelphia 1 / ATCC 33152 / DSM 7513).